The sequence spans 422 residues: O-methyltransferase kk1A (422 aa).

Asp-277 contributes to the S-adenosyl-L-methionine binding site. Residue His-320 is the Proton acceptor of the active site.

Belongs to the class I-like SAM-binding methyltransferase superfamily. Cation-independent O-methyltransferase family.

Its pathway is secondary metabolite biosynthesis. O-methyltransferase; part of the gene cluster that mediates the biosynthesis of KK-1, a novel cyclic depsipeptide with 10 residues which is a promising active compound with high activity against many plant pathogens, especially Botrytis cinerea. Within the pathway, kk1A is responsible for the O-methylation of tyrosine as a free amino acid before its activation as an aminoacyl-AMP by the corresponding A domain of kk1B. The nonribosomal peptide synthetase (NRPS) kk1B catalyzes the elongation and cyclization of the decapeptide chain composed of 1 D-lactic acid residue (D-Lac), 1 pipecolic acid residue (Pip), 1 aspartic acid residue (Asp), 1 isoleucine residue (Ile), 1 glycine residue (Gly), 1 tyrosine residue (Tyr) and 4 valine residues (Val). The Asp, Ile and 3 Val residues are N-methylated by the 5 methyltransferase domains from the NRPS (found in modules 3, 5, 6, 7 and 9), whereas the Tyr residue is O-methylated by the cluster encoded O-methyltransferase kk1A. The thioesterase kk1J is likely to be involved in the corrective mechanism of peptide chain synthesis. The D-lactate dehydrogenase kk1H is involved in the synthesis of D-lactic acid from pyruvic acid, which is recognized by the A domain of the first kk1B module. The pyrroline-5-carboxylate reductase kk1I is involved in the synthesis of the L-pipecolic acid residue of KK-1 from delta-1-pyrroline-5-carboxylate (P5C), a metabolic intermediate of lysine. It is still unclear how kk1C and kk1D are involved in the production of KK-1. In Curvularia clavata, this protein is O-methyltransferase kk1A.